A 171-amino-acid polypeptide reads, in one-letter code: Inosine/xanthosine triphosphatase (171 aa).

Substrate is bound at residue T8–K13. The Mg(2+) site is built by E38 and E68. Substrate is bound at residue E68–A69.

This sequence belongs to the YjjX NTPase family. In terms of assembly, homodimer. It depends on Mg(2+) as a cofactor. Mn(2+) is required as a cofactor.

It catalyses the reaction XTP + H2O = XDP + phosphate + H(+). It carries out the reaction ITP + H2O = IDP + phosphate + H(+). In terms of biological role, phosphatase that hydrolyzes non-canonical purine nucleotides such as XTP and ITP to their respective diphosphate derivatives. Probably excludes non-canonical purines from DNA/RNA precursor pool, thus preventing their incorporation into DNA/RNA and avoiding chromosomal lesions. The sequence is that of Inosine/xanthosine triphosphatase (yjjX) from Salmonella arizonae (strain ATCC BAA-731 / CDC346-86 / RSK2980).